The primary structure comprises 357 residues: Alanine racemase (357 aa).

Lysine 35 functions as the Proton acceptor; specific for D-alanine in the catalytic mechanism. Lysine 35 is subject to N6-(pyridoxal phosphate)lysine. Substrate is bound at residue arginine 131. Tyrosine 256 (proton acceptor; specific for L-alanine) is an active-site residue. Residue methionine 304 coordinates substrate.

The protein belongs to the alanine racemase family. Pyridoxal 5'-phosphate serves as cofactor.

The enzyme catalyses L-alanine = D-alanine. Its pathway is amino-acid biosynthesis; D-alanine biosynthesis; D-alanine from L-alanine: step 1/1. Its function is as follows. Catalyzes the interconversion of L-alanine and D-alanine. May also act on other amino acids. This Legionella pneumophila (strain Corby) protein is Alanine racemase (alr).